Consider the following 277-residue polypeptide: Myelin proteolipid protein (277 aa).

The Cytoplasmic segment spans residues 2–9 (GLLECCAR). 3 S-palmitoyl cysteine lipidation sites follow: cysteine 6, cysteine 7, and cysteine 10. The helical transmembrane segment at 10-36 (CLVGAPFASLVATGLCFFGVALFCGCG) threads the bilayer. At 37–63 (HEALTGTEKLIETYFSKNYQDYEYLIN) the chain is on the extracellular side. A helical transmembrane segment spans residues 64-88 (VIHAFQYVIYGTASFFFLYGALLLA). Topologically, residues 89–151 (EGFYTTGAVR…LGKWLGHPDK (63 aa)) are cytoplasmic. Cysteine 109 is lipidated: S-palmitoyl cysteine. A Phosphoserine modification is found at serine 114. Threonine 116 and threonine 118 each carry phosphothreonine. S-palmitoyl cysteine attachment occurs at residues cysteine 139 and cysteine 141. The helical transmembrane segment at 152 to 177 (FVGITYALTVVWLLVFACSAVPVYIY) threads the bilayer. Over 178–233 (FNTWTTCQSIAFPSKTSASIGSLCADARMYGVLPWNAFPGKVCGSNLLSICKTAEF) the chain is Extracellular. Disulfide bonds link cysteine 184–cysteine 228 and cysteine 201–cysteine 220. A lipid anchor (O-palmitoyl serine) is attached at serine 199. The chain crosses the membrane as a helical span at residues 234-260 (QMTFHLFIAAFVGAAATLVSLLTFMIA). The Cytoplasmic portion of the chain corresponds to 261–277 (ATYNFAVLKLMGRGTKF).

It belongs to the myelin proteolipid protein family. In terms of assembly, interacts with MAL.

It is found in the cell membrane. Its subcellular location is the myelin membrane. Its function is as follows. This is the major myelin protein from the central nervous system. It plays an important role in the formation or maintenance of the multilamellar structure of myelin. The polypeptide is Myelin proteolipid protein (Plp1) (Mus musculus (Mouse)).